A 338-amino-acid chain; its full sequence is MEMO1 family protein MHO1 (338 aa).

This sequence belongs to the MEMO1 family.

The protein resides in the cytoplasm. Its subcellular location is the nucleus. Functionally, plays a role in haploid invasive growth under conditions of nutrient insufficiency, suggesting that the function of the MEMO1 family in cell motility/invasion is conserved across species. This is MEMO1 family protein MHO1 from Saccharomyces cerevisiae (strain ATCC 204508 / S288c) (Baker's yeast).